A 162-amino-acid polypeptide reads, in one-letter code: Disulfide bond formation protein B (162 aa).

Residues 1-8 are Cytoplasmic-facing; sequence MTPLFRKA. The chain crosses the membrane as a helical span at residues 9 to 25; it reads VWLLFAVSVCAFAGSLA. At 26 to 43 the chain is on the periplasmic side; it reads AQYVLGMEPCVLCISQRL. A disulfide bridge links cysteine 35 with cysteine 38. The helical transmembrane segment at 44 to 60 threads the bilayer; it reads CVLATALCTAIVLMCRP. At 61-67 the chain is on the cytoplasmic side; it reads RRRAGGL. A helical membrane pass occupies residues 68–85; the sequence is FGAVFISIPAVTGISVAA. Topologically, residues 86 to 141 are periplasmic; sequence YQLWLQSLPPGTAPSCGAPWTFRLKGWPLFDWFEPVVRGFGNCAEPDYLLGIALPV. An intrachain disulfide couples cysteine 101 to cysteine 128. Residues 142 to 160 form a helical membrane-spanning segment; that stretch reads WSVAYFLAVVLTVWWAWAR. Residues 161-162 lie on the Cytoplasmic side of the membrane; that stretch reads AK.

Belongs to the DsbB family.

Its subcellular location is the cell inner membrane. Functionally, required for disulfide bond formation in some periplasmic proteins. Acts by oxidizing the DsbA protein. This chain is Disulfide bond formation protein B, found in Neisseria meningitidis serogroup B (strain ATCC BAA-335 / MC58).